The sequence spans 443 residues: Light-independent protochlorophyllide reductase subunit N (443 aa).

[4Fe-4S] cluster is bound by residues cysteine 15, cysteine 40, and cysteine 99.

This sequence belongs to the BchN/ChlN family. In terms of assembly, protochlorophyllide reductase is composed of three subunits; BchL, BchN and BchB. Forms a heterotetramer of two BchB and two BchN subunits. The cofactor is [4Fe-4S] cluster.

The enzyme catalyses chlorophyllide a + oxidized 2[4Fe-4S]-[ferredoxin] + 2 ADP + 2 phosphate = protochlorophyllide a + reduced 2[4Fe-4S]-[ferredoxin] + 2 ATP + 2 H2O. It functions in the pathway porphyrin-containing compound metabolism; bacteriochlorophyll biosynthesis (light-independent). Functionally, component of the dark-operative protochlorophyllide reductase (DPOR) that uses Mg-ATP and reduced ferredoxin to reduce ring D of protochlorophyllide (Pchlide) to form chlorophyllide a (Chlide). This reaction is light-independent. The NB-protein (BchN-BchB) is the catalytic component of the complex. This chain is Light-independent protochlorophyllide reductase subunit N, found in Heliobacterium modesticaldum (strain ATCC 51547 / Ice1).